Consider the following 121-residue polypeptide: Ribonuclease P protein component (121 aa).

It belongs to the RnpA family. In terms of assembly, consists of a catalytic RNA component (M1 or rnpB) and a protein subunit.

It catalyses the reaction Endonucleolytic cleavage of RNA, removing 5'-extranucleotides from tRNA precursor.. In terms of biological role, RNaseP catalyzes the removal of the 5'-leader sequence from pre-tRNA to produce the mature 5'-terminus. It can also cleave other RNA substrates such as 4.5S RNA. The protein component plays an auxiliary but essential role in vivo by binding to the 5'-leader sequence and broadening the substrate specificity of the ribozyme. The protein is Ribonuclease P protein component of Coxiella burnetii (strain Dugway 5J108-111).